The sequence spans 116 residues: Ribonuclease P protein component (116 aa).

It belongs to the RnpA family. As to quaternary structure, consists of a catalytic RNA component (M1 or rnpB) and a protein subunit.

It catalyses the reaction Endonucleolytic cleavage of RNA, removing 5'-extranucleotides from tRNA precursor.. Functionally, RNaseP catalyzes the removal of the 5'-leader sequence from pre-tRNA to produce the mature 5'-terminus. It can also cleave other RNA substrates such as 4.5S RNA. The protein component plays an auxiliary but essential role in vivo by binding to the 5'-leader sequence and broadening the substrate specificity of the ribozyme. The chain is Ribonuclease P protein component from Lachnoclostridium phytofermentans (strain ATCC 700394 / DSM 18823 / ISDg) (Clostridium phytofermentans).